Here is a 130-residue protein sequence, read N- to C-terminus: Small ribosomal subunit protein uS9 (130 aa).

Residues 109-130 (RMKERKKYGLKAARRAPQFSKR) form a disordered region. A compositionally biased stretch (basic residues) spans 111-130 (KERKKYGLKAARRAPQFSKR).

It belongs to the universal ribosomal protein uS9 family.

The polypeptide is Small ribosomal subunit protein uS9 (Lachnoclostridium phytofermentans (strain ATCC 700394 / DSM 18823 / ISDg) (Clostridium phytofermentans)).